The sequence spans 453 residues: tRNA modification GTPase MnmE (453 aa).

Residues Arg22, Glu79, and Lys119 each contribute to the (6S)-5-formyl-5,6,7,8-tetrahydrofolate site. The TrmE-type G domain maps to 215–376 (GMKVVIAGRP…LRNHLKECMG (162 aa)). Asn225 contacts K(+). Residues 225-230 (NAGKSS), 244-250 (TDIAGTT), 269-272 (DTAG), and 334-337 (NKAD) contribute to the GTP site. A Mg(2+)-binding site is contributed by Ser229. K(+) contacts are provided by Thr244, Ile246, and Thr249. Thr250 lines the Mg(2+) pocket. Lys453 lines the (6S)-5-formyl-5,6,7,8-tetrahydrofolate pocket.

The protein belongs to the TRAFAC class TrmE-Era-EngA-EngB-Septin-like GTPase superfamily. TrmE GTPase family. As to quaternary structure, homodimer. Heterotetramer of two MnmE and two MnmG subunits. K(+) is required as a cofactor.

It is found in the cytoplasm. Exhibits a very high intrinsic GTPase hydrolysis rate. Involved in the addition of a carboxymethylaminomethyl (cmnm) group at the wobble position (U34) of certain tRNAs, forming tRNA-cmnm(5)s(2)U34. This chain is tRNA modification GTPase MnmE, found in Vibrio vulnificus (strain YJ016).